Consider the following 403-residue polypeptide: NADH-quinone oxidoreductase subunit D (403 aa).

The protein belongs to the complex I 49 kDa subunit family. In terms of assembly, NDH-1 is composed of 15 different subunits. Subunits NuoB, C, D, E, F, and G constitute the peripheral sector of the complex.

The protein resides in the cell membrane. The enzyme catalyses a quinone + NADH + 5 H(+)(in) = a quinol + NAD(+) + 4 H(+)(out). Its function is as follows. NDH-1 shuttles electrons from NADH, via FMN and iron-sulfur (Fe-S) centers, to quinones in the respiratory chain. The immediate electron acceptor for the enzyme in this species is believed to be a menaquinone. Couples the redox reaction to proton translocation (for every two electrons transferred, four hydrogen ions are translocated across the cytoplasmic membrane), and thus conserves the redox energy in a proton gradient. The polypeptide is NADH-quinone oxidoreductase subunit D (Deinococcus geothermalis (strain DSM 11300 / CIP 105573 / AG-3a)).